A 415-amino-acid polypeptide reads, in one-letter code: Glucose-1-phosphate adenylyltransferase (415 aa).

Alpha-D-glucose 1-phosphate-binding positions include Tyr100, Gly165, 182-183, and Ser200; that span reads EK.

It belongs to the bacterial/plant glucose-1-phosphate adenylyltransferase family. In terms of assembly, homotetramer.

It catalyses the reaction alpha-D-glucose 1-phosphate + ATP + H(+) = ADP-alpha-D-glucose + diphosphate. It functions in the pathway glycan biosynthesis; glycogen biosynthesis. Functionally, involved in the biosynthesis of ADP-glucose, a building block required for the elongation reactions to produce glycogen. Catalyzes the reaction between ATP and alpha-D-glucose 1-phosphate (G1P) to produce pyrophosphate and ADP-Glc. In Bifidobacterium animalis subsp. lactis (strain AD011), this protein is Glucose-1-phosphate adenylyltransferase.